A 208-amino-acid chain; its full sequence is Small ribosomal subunit protein uS5 (208 aa).

Positions 1 to 38 are disordered; sequence MPGRERRDGGRSADDNQKKNDRRGGRRDDRRNQQQDER. Positions 41–104 constitute an S5 DRBM domain; that stretch reads YIERVVTINR…EEARKNFFRV (64 aa).

Belongs to the universal ribosomal protein uS5 family. In terms of assembly, part of the 30S ribosomal subunit. Contacts proteins S4 and S8.

Functionally, with S4 and S12 plays an important role in translational accuracy. Located at the back of the 30S subunit body where it stabilizes the conformation of the head with respect to the body. This chain is Small ribosomal subunit protein uS5, found in Corynebacterium diphtheriae (strain ATCC 700971 / NCTC 13129 / Biotype gravis).